We begin with the raw amino-acid sequence, 457 residues long: Phosphomethylpyrimidine synthase (457 aa).

Residues Asn-80, Met-109, Tyr-139, His-175, 195–197, 236–239, and Glu-275 contribute to the substrate site; these read SRG and DSLR. Zn(2+) is bound at residue His-279. Tyr-302 contacts substrate. His-343 lines the Zn(2+) pocket. Positions 423, 426, and 431 each coordinate [4Fe-4S] cluster.

It belongs to the ThiC family. Requires [4Fe-4S] cluster as cofactor.

The catalysed reaction is 5-amino-1-(5-phospho-beta-D-ribosyl)imidazole + S-adenosyl-L-methionine = 4-amino-2-methyl-5-(phosphooxymethyl)pyrimidine + CO + 5'-deoxyadenosine + formate + L-methionine + 3 H(+). Its pathway is cofactor biosynthesis; thiamine diphosphate biosynthesis. Functionally, catalyzes the synthesis of the hydroxymethylpyrimidine phosphate (HMP-P) moiety of thiamine from aminoimidazole ribotide (AIR) in a radical S-adenosyl-L-methionine (SAM)-dependent reaction. The chain is Phosphomethylpyrimidine synthase from Nostoc sp. (strain PCC 7120 / SAG 25.82 / UTEX 2576).